We begin with the raw amino-acid sequence, 697 residues long: Potassium-transporting ATPase ATP-binding subunit (697 aa).

4 helical membrane passes run 55–75, 79–99, 245–265, and 271–291; these read PIMF…FLPS, SIPG…VLFA, LTLI…YLGF, and VLVA…LSAI. Catalysis depends on Asp-324, which acts as the 4-aspartylphosphate intermediate. ATP-binding positions include Asp-361, Glu-365, 393-400, and Lys-412; that span reads FKAETRMS. Positions 535 and 539 each coordinate Mg(2+). The next 3 helical transmembrane spans lie at 605 to 625, 633 to 653, and 677 to 697; these read FAII…LNIM, AILS…PLAM, and GGVI…GLFI.

This sequence belongs to the cation transport ATPase (P-type) (TC 3.A.3) family. Type IA subfamily. In terms of assembly, the system is composed of three essential subunits: KdpA, KdpB and KdpC.

The protein localises to the cell membrane. It catalyses the reaction K(+)(out) + ATP + H2O = K(+)(in) + ADP + phosphate + H(+). In terms of biological role, part of the high-affinity ATP-driven potassium transport (or Kdp) system, which catalyzes the hydrolysis of ATP coupled with the electrogenic transport of potassium into the cytoplasm. This subunit is responsible for energy coupling to the transport system and for the release of the potassium ions to the cytoplasm. The polypeptide is Potassium-transporting ATPase ATP-binding subunit (Bacillus anthracis (strain CDC 684 / NRRL 3495)).